The following is a 218-amino-acid chain: Response regulator UvrY (218 aa).

The Response regulatory domain occupies 3–119 (NVLLVDDHEL…EVVSAIRSVY (117 aa)). Aspartate 54 is modified (4-aspartylphosphate). In terms of domain architecture, HTH luxR-type spans 143–208 (TESPFASLSE…ELTHLAIRHG (66 aa)). The H-T-H motif DNA-binding region spans 167–186 (VNEISEQLNLSPKTVNSYRY).

In terms of processing, phosphorylated and activated by BarA.

The protein localises to the cytoplasm. Its function is as follows. Member of the two-component regulatory system UvrY/BarA involved in the regulation of carbon metabolism via the CsrA/CsrB regulatory system. UvrY activates the transcription of the untranslated csrB RNA and of barA, in an autoregulatory loop. Mediates the effects of CsrA on csrB RNA by BarA-dependent and BarA-independent mechanisms. This Escherichia coli (strain K12) protein is Response regulator UvrY (uvrY).